The primary structure comprises 504 residues: Maturase K (504 aa).

It belongs to the intron maturase 2 family. MatK subfamily.

It is found in the plastid. The protein localises to the chloroplast. In terms of biological role, usually encoded in the trnK tRNA gene intron. Probably assists in splicing its own and other chloroplast group II introns. The sequence is that of Maturase K from Arabidopsis lyrata (Lyre-leaved rock-cress).